Here is a 338-residue protein sequence, read N- to C-terminus: uncharacterized protein (338 aa).

Transmembrane regions (helical) follow at residues 13 to 33 (PAYSHVLIAGGIGGATADFLM), 71 to 91 (GLYSGVCPMLIGSLPATALFF), 110 to 130 (TLCFLLAGFVGDLFASVVYVP), 176 to 196 (YGYRATILRDIPFSGFQLLFY), 218 to 238 (LITGSLAGAGAGFLTTPLDVA), and 301 to 321 (FRGFGPRIFWTSSQSSLMFVF). Solcar repeat units lie at residues 13 to 100 (PAYS…TKRH), 108 to 202 (PETL…LRQV), and 216 to 328 (RELI…IIRL).

This sequence belongs to the mitochondrial carrier (TC 2.A.29) family.

It is found in the mitochondrion inner membrane. Mitochondrial solute carriers shuttle metabolites, nucleotides, and cofactors through the mitochondrial inner membrane. This is an uncharacterized protein from Schizosaccharomyces pombe (strain 972 / ATCC 24843) (Fission yeast).